The chain runs to 346 residues: Dihydroorotase (346 aa).

Zn(2+) contacts are provided by histidine 14 and histidine 16. Substrate-binding positions include 16–18 (HLR) and asparagine 42. Lysine 100, histidine 137, and histidine 175 together coordinate Zn(2+). At lysine 100 the chain carries N6-carboxylysine. Histidine 137 provides a ligand contact to substrate. Substrate is bound at residue leucine 220. Position 248 (aspartate 248) interacts with Zn(2+). Aspartate 248 is a catalytic residue. Positions 252 and 264 each coordinate substrate.

Belongs to the metallo-dependent hydrolases superfamily. DHOase family. Class II DHOase subfamily. In terms of assembly, homodimer. Zn(2+) serves as cofactor.

It carries out the reaction (S)-dihydroorotate + H2O = N-carbamoyl-L-aspartate + H(+). It functions in the pathway pyrimidine metabolism; UMP biosynthesis via de novo pathway; (S)-dihydroorotate from bicarbonate: step 3/3. Catalyzes the reversible cyclization of carbamoyl aspartate to dihydroorotate. The sequence is that of Dihydroorotase from Cereibacter sphaeroides (strain ATCC 17025 / ATH 2.4.3) (Rhodobacter sphaeroides).